The sequence spans 199 residues: 3-isopropylmalate dehydratase small subunit (199 aa).

It belongs to the LeuD family. LeuD type 1 subfamily. Heterodimer of LeuC and LeuD.

It carries out the reaction (2R,3S)-3-isopropylmalate = (2S)-2-isopropylmalate. Its pathway is amino-acid biosynthesis; L-leucine biosynthesis; L-leucine from 3-methyl-2-oxobutanoate: step 2/4. Its function is as follows. Catalyzes the isomerization between 2-isopropylmalate and 3-isopropylmalate, via the formation of 2-isopropylmaleate. The protein is 3-isopropylmalate dehydratase small subunit of Bacillus velezensis (strain DSM 23117 / BGSC 10A6 / LMG 26770 / FZB42) (Bacillus amyloliquefaciens subsp. plantarum).